The sequence spans 157 residues: Protein Smg homolog (157 aa).

The protein belongs to the Smg family.

The polypeptide is Protein Smg homolog (Shewanella putrefaciens (strain CN-32 / ATCC BAA-453)).